A 372-amino-acid polypeptide reads, in one-letter code: MLVWLFGWLGQYYAPFSAVSSLTLRALLAVITALAFSMIFGSRVIRRLRALKYGQAIRNDGPQSHLVKTGTPTMGGVLILSAIGVSTLLWARLNNPYVWILLIVMIIFGAVGWADDWLKIKYKNPKGLIARKKYFWLSMGALFVGISLYYIATLQPNVVTTREMQDLLLPIFKDWMIPFSAVPFGIGFIIFTYFVINGASNAVNLTDGLDGLAILPVVLVAAGLGAMAYVSGDVRFADYLHVPYIAYNSEVIIVCGAMIGAGLGFLWFNAHPAQVFMGDVGALSLGAMLGTIAVMTRQEIAFAIMGGLFVAEALSVMLQVGSYKLRKKRVFRMAPLHHHFEEIGWKETQVVARFWIIAIILVILGLMTLKLR.

Helical transmembrane passes span Ser21–Gly41, Thr71–Ala91, Val98–Leu118, Tyr134–Leu154, Met176–Ile196, Gly211–Ser231, Val251–His271, Val275–Met295, Ile300–Val320, and Gln349–Leu369.

Belongs to the glycosyltransferase 4 family. MraY subfamily. Mg(2+) serves as cofactor.

The protein localises to the cell inner membrane. The catalysed reaction is UDP-N-acetyl-alpha-D-muramoyl-L-alanyl-gamma-D-glutamyl-meso-2,6-diaminopimeloyl-D-alanyl-D-alanine + di-trans,octa-cis-undecaprenyl phosphate = di-trans,octa-cis-undecaprenyl diphospho-N-acetyl-alpha-D-muramoyl-L-alanyl-D-glutamyl-meso-2,6-diaminopimeloyl-D-alanyl-D-alanine + UMP. Its pathway is cell wall biogenesis; peptidoglycan biosynthesis. Functionally, catalyzes the initial step of the lipid cycle reactions in the biosynthesis of the cell wall peptidoglycan: transfers peptidoglycan precursor phospho-MurNAc-pentapeptide from UDP-MurNAc-pentapeptide onto the lipid carrier undecaprenyl phosphate, yielding undecaprenyl-pyrophosphoryl-MurNAc-pentapeptide, known as lipid I. The sequence is that of Phospho-N-acetylmuramoyl-pentapeptide-transferase from Psychrobacter arcticus (strain DSM 17307 / VKM B-2377 / 273-4).